The chain runs to 29 residues: Cytochrome b6-f complex subunit 8 (29 aa).

A helical transmembrane segment spans residues 3-23 (ILALGWVSVLALFTWSIAMVV).

The protein belongs to the PetN family. As to quaternary structure, the 4 large subunits of the cytochrome b6-f complex are cytochrome b6, subunit IV (17 kDa polypeptide, PetD), cytochrome f and the Rieske protein, while the 4 small subunits are PetG, PetL, PetM and PetN. The complex functions as a dimer.

Its subcellular location is the cellular thylakoid membrane. In terms of biological role, component of the cytochrome b6-f complex, which mediates electron transfer between photosystem II (PSII) and photosystem I (PSI), cyclic electron flow around PSI, and state transitions. The sequence is that of Cytochrome b6-f complex subunit 8 from Gloeothece citriformis (strain PCC 7424) (Cyanothece sp. (strain PCC 7424)).